A 496-amino-acid chain; its full sequence is Probable cytosol aminopeptidase (496 aa).

Mn(2+)-binding residues include lysine 266 and aspartate 271. Lysine 278 is an active-site residue. Positions 289, 348, and 350 each coordinate Mn(2+). The active site involves arginine 352.

It belongs to the peptidase M17 family. It depends on Mn(2+) as a cofactor.

The protein localises to the cytoplasm. It carries out the reaction Release of an N-terminal amino acid, Xaa-|-Yaa-, in which Xaa is preferably Leu, but may be other amino acids including Pro although not Arg or Lys, and Yaa may be Pro. Amino acid amides and methyl esters are also readily hydrolyzed, but rates on arylamides are exceedingly low.. It catalyses the reaction Release of an N-terminal amino acid, preferentially leucine, but not glutamic or aspartic acids.. Presumably involved in the processing and regular turnover of intracellular proteins. Catalyzes the removal of unsubstituted N-terminal amino acids from various peptides. The sequence is that of Probable cytosol aminopeptidase from Pseudomonas syringae pv. tomato (strain ATCC BAA-871 / DC3000).